Here is a 126-residue protein sequence, read N- to C-terminus: Adult-specific rigid cuticular protein 12.4 (126 aa).

The 79-residue stretch at 9–87 (GGAYNFGFNT…AMAALAPKAP (79 aa)) folds into the Chitin-binding type R&amp;R domain.

In terms of biological role, component of the rigid cuticle of the spider. This Araneus diadematus (European garden spider) protein is Adult-specific rigid cuticular protein 12.4.